Consider the following 244-residue polypeptide: Lipid A 1-phosphatase (244 aa).

The next 6 membrane-spanning stretches (helical) occupy residues L28–A48, E60–F80, A98–L118, F154–P174, V178–Y198, and D201–A221.

The protein belongs to the lipid A LpxE 1-phosphatase family.

Its subcellular location is the cell inner membrane. Its pathway is bacterial outer membrane biogenesis; LPS lipid A biosynthesis. Removes the 1-phosphate group from (tetraacyl) lipid A species, has no requirement for the Kdo(2) moiety of lipid A. Has no 4'-phosphatase activity. Reduces sensitivity of S.meliloti strain 1021 to the cationic antimicrobial peptide (CAMP) polymyxin B. The chain is Lipid A 1-phosphatase from Rhizobium johnstonii (strain DSM 114642 / LMG 32736 / 3841) (Rhizobium leguminosarum bv. viciae).